A 94-amino-acid chain; its full sequence is MTTGNNDFYYSNKYEDDEFEYRHVHVTKDVSKLIPKNRLMSETEWRSLGIQQSPGWMHYMIHGPERHVLLFRRPLAATQKTGGNVRSGNAVGVR.

Belongs to the CKS family. In terms of assembly, forms a homohexamer that can probably bind six kinase subunits. Interacts with cdk-1.

The protein resides in the nucleus. In terms of biological role, binds to the catalytic subunit of the cyclin dependent kinases and is essential for their biological function. Has a role in the exit from M phase during early mitotic cell division. More specifically, thought to act by degrading B-type cyclins that causes breakdown of nuclear envelope and exit mitosis. The polypeptide is Cyclin-dependent kinases regulatory subunit (cks-1) (Caenorhabditis elegans).